The following is a 995-amino-acid chain: Serine-aspartate repeat-containing protein C (995 aa).

An N-terminal signal peptide occupies residues 1 to 50 (MNNKKTATNRKGMIPNRLNKFSIRKYSVGTASILVGTTLIFGLSGHEAKA). The short motif at 21 to 32 (FSIRKYSVGTAS) is the YSIRK-G/S signaling motif element. A disordered region spans residues 51–164 (AEHTNGELNQ…STTPKTTTIK (114 aa)). Positions 51–495 (AEHTNGELNQ…GSSTANGDQK (445 aa)) are ligand binding A region. Polar residues predominate over residues 56–71 (GELNQSKNETTAPSEN). Basic and acidic residues predominate over residues 72–83 (KTTKKVDSRQLK). Residues 84–155 (DNTQTATADQ…SNLTQAKDVS (72 aa)) show a composition bias toward polar residues. 2 consecutive CNA-B domains span residues 496–606 (KYNL…YKTP) and 607–717 (KYSL…EEET). Residues 678–975 (TQTGTNTTED…NNSNNGTLFG (298 aa)) form a disordered region. 2 stretches are compositionally biased toward acidic residues: residues 685–695 (TEDDKDADGGE) and 712–934 (YYEE…DSDS). The LPXTG sorting signal motif lies at 958-962 (LPETG). Positions 960-975 (ETGSENNNSNNGTLFG) are enriched in low complexity. Residue Thr961 is modified to Pentaglycyl murein peptidoglycan amidated threonine. A propeptide spans 962 to 995 (GSENNNSNNGTLFGGLFAALGSLLLFGRRKKQNK) (removed by sortase).

It belongs to the serine-aspartate repeat-containing protein (SDr) family. In terms of assembly, homodimerizes; via N2-Domain. Interacts with host NRXN1; this interaction mediates bacterial attachment to host cells.

Its subcellular location is the secreted. It localises to the cell wall. Its function is as follows. Cell surface-associated calcium-binding protein which plays an important role in adhesion and pathogenesis. Mediates interactions with components of the extracellular matrix such as host NRXN1 to promote bacterial adhesion. This is Serine-aspartate repeat-containing protein C (sdrC) from Staphylococcus aureus (strain NCTC 8325 / PS 47).